Here is a 968-residue protein sequence, read N- to C-terminus: RNA polymerase-associated protein RapA (968 aa).

The Helicase ATP-binding domain maps to 164–334 (DVGRRHAPRV…FARLRLLDPN (171 aa)). 177-184 (DEVGLGKT) contributes to the ATP binding site. Residues 280–283 (DEAH) carry the DEAH box motif. The Helicase C-terminal domain occupies 490 to 662 (RVEWLMGYLT…YLASPDQTEG (173 aa)).

This sequence belongs to the SNF2/RAD54 helicase family. RapA subfamily. Interacts with the RNAP. Has a higher affinity for the core RNAP than for the holoenzyme. Its ATPase activity is stimulated by binding to RNAP.

Transcription regulator that activates transcription by stimulating RNA polymerase (RNAP) recycling in case of stress conditions such as supercoiled DNA or high salt concentrations. Probably acts by releasing the RNAP, when it is trapped or immobilized on tightly supercoiled DNA. Does not activate transcription on linear DNA. Probably not involved in DNA repair. The protein is RNA polymerase-associated protein RapA of Escherichia coli O9:H4 (strain HS).